We begin with the raw amino-acid sequence, 121 residues long: Large ribosomal subunit protein bL12 (121 aa).

This sequence belongs to the bacterial ribosomal protein bL12 family. As to quaternary structure, homodimer. Part of the ribosomal stalk of the 50S ribosomal subunit. Forms a multimeric L10(L12)X complex, where L10 forms an elongated spine to which 2 to 4 L12 dimers bind in a sequential fashion. Binds GTP-bound translation factors.

Its function is as follows. Forms part of the ribosomal stalk which helps the ribosome interact with GTP-bound translation factors. Is thus essential for accurate translation. In Streptococcus uberis (strain ATCC BAA-854 / 0140J), this protein is Large ribosomal subunit protein bL12.